We begin with the raw amino-acid sequence, 953 residues long: Translation initiation factor IF-2 (953 aa).

Residues 55 to 340 are disordered; sequence GVTTEAPAAS…KSKRQKRNEY (286 aa). The span at 81 to 93 shows a compositional bias: low complexity; sequence KPAATPQQAAKPA. A compositionally biased stretch (pro residues) spans 110 to 119; it reads PKPAAKPVPK. Low complexity-rich tracts occupy residues 123–133 and 143–160; these read SAAKAESSAPK and KPAA…MPRP. The span at 202–219 shows a compositional bias: gly residues; the sequence is PGGGPRPGGNRPQGGQGG. The span at 233–248 shows a compositional bias: low complexity; that stretch reads QPRPQGGSRSQQSGGQ. The segment covering 280–323 has biased composition (gly residues); it reads NGRGGAGGQGGRPGFGGGRPGGGGSAGGRGGRRGGTAGAFGRPG. Residues 327–336 show a composition bias toward basic residues; that stretch reads RKGRKSKRQK. Residues 449 to 621 enclose the tr-type G domain; the sequence is KRPPVVTVMG…VLLTADASLD (173 aa). Residues 458–465 form a G1 region; the sequence is GHVDHGKT. A GTP-binding site is contributed by 458 to 465; it reads GHVDHGKT. The segment at 483 to 487 is G2; the sequence is GITQG. The interval 508–511 is G3; it reads DTPG. GTP-binding positions include 508–512 and 562–565; these read DTPGH and NKID. A G4 region spans residues 562-565; it reads NKID. The tract at residues 598 to 600 is G5; the sequence is SAK.

This sequence belongs to the TRAFAC class translation factor GTPase superfamily. Classic translation factor GTPase family. IF-2 subfamily.

The protein resides in the cytoplasm. In terms of biological role, one of the essential components for the initiation of protein synthesis. Protects formylmethionyl-tRNA from spontaneous hydrolysis and promotes its binding to the 30S ribosomal subunits. Also involved in the hydrolysis of GTP during the formation of the 70S ribosomal complex. The protein is Translation initiation factor IF-2 of Corynebacterium diphtheriae (strain ATCC 700971 / NCTC 13129 / Biotype gravis).